The primary structure comprises 736 residues: ABC transporter G family member 16 (736 aa).

In terms of domain architecture, ABC transporter spans 88–332; that stretch reads LDFHDLVPWR…FAGFGNPIPE (245 aa). An ATP-binding site is contributed by 125–132; that stretch reads GASGSGKS. Helical transmembrane passes span 410-430, 449-469, 484-504, 525-545, 569-589, 590-610, and 709-729; these read SVIN…PFWI, LLGM…TVFW, FFAF…PVFL, VLSH…AFAV, ASFW…PHVM, LGYT…GFFI, and LLIT…CLLL. One can recognise an ABC transmembrane type-2 domain in the interval 430 to 640; sequence IEIKTLTRRS…PYEAVLQNEF (211 aa).

Belongs to the ABC transporter superfamily. ABCG family. Eye pigment precursor importer (TC 3.A.1.204) subfamily.

It is found in the membrane. This chain is ABC transporter G family member 16 (ABCG16), found in Arabidopsis thaliana (Mouse-ear cress).